A 416-amino-acid polypeptide reads, in one-letter code: Serine hydroxymethyltransferase (416 aa).

(6S)-5,6,7,8-tetrahydrofolate contacts are provided by residues L118 and 122 to 124; that span reads GHL. K226 bears the N6-(pyridoxal phosphate)lysine mark. (6S)-5,6,7,8-tetrahydrofolate contacts are provided by residues E242 and 350–352; that span reads SPF.

This sequence belongs to the SHMT family. In terms of assembly, homodimer. The cofactor is pyridoxal 5'-phosphate.

The protein resides in the cytoplasm. It carries out the reaction (6R)-5,10-methylene-5,6,7,8-tetrahydrofolate + glycine + H2O = (6S)-5,6,7,8-tetrahydrofolate + L-serine. It functions in the pathway one-carbon metabolism; tetrahydrofolate interconversion. Its pathway is amino-acid biosynthesis; glycine biosynthesis; glycine from L-serine: step 1/1. Functionally, catalyzes the reversible interconversion of serine and glycine with tetrahydrofolate (THF) serving as the one-carbon carrier. This reaction serves as the major source of one-carbon groups required for the biosynthesis of purines, thymidylate, methionine, and other important biomolecules. Also exhibits THF-independent aldolase activity toward beta-hydroxyamino acids, producing glycine and aldehydes, via a retro-aldol mechanism. The chain is Serine hydroxymethyltransferase from Wolinella succinogenes (strain ATCC 29543 / DSM 1740 / CCUG 13145 / JCM 31913 / LMG 7466 / NCTC 11488 / FDC 602W) (Vibrio succinogenes).